The sequence spans 55 residues: uncharacterized protein (55 aa).

This is an uncharacterized protein from Dictyostelium discoideum (Social amoeba).